The sequence spans 361 residues: UDP-N-acetylglucosamine--N-acetylmuramyl-(pentapeptide) pyrophosphoryl-undecaprenol N-acetylglucosamine transferase (361 aa).

Residues 11–13 (TGG), N120, R161, S188, and Q282 contribute to the UDP-N-acetyl-alpha-D-glucosamine site.

It belongs to the glycosyltransferase 28 family. MurG subfamily.

It localises to the cell inner membrane. The catalysed reaction is di-trans,octa-cis-undecaprenyl diphospho-N-acetyl-alpha-D-muramoyl-L-alanyl-D-glutamyl-meso-2,6-diaminopimeloyl-D-alanyl-D-alanine + UDP-N-acetyl-alpha-D-glucosamine = di-trans,octa-cis-undecaprenyl diphospho-[N-acetyl-alpha-D-glucosaminyl-(1-&gt;4)]-N-acetyl-alpha-D-muramoyl-L-alanyl-D-glutamyl-meso-2,6-diaminopimeloyl-D-alanyl-D-alanine + UDP + H(+). Its pathway is cell wall biogenesis; peptidoglycan biosynthesis. In terms of biological role, cell wall formation. Catalyzes the transfer of a GlcNAc subunit on undecaprenyl-pyrophosphoryl-MurNAc-pentapeptide (lipid intermediate I) to form undecaprenyl-pyrophosphoryl-MurNAc-(pentapeptide)GlcNAc (lipid intermediate II). The chain is UDP-N-acetylglucosamine--N-acetylmuramyl-(pentapeptide) pyrophosphoryl-undecaprenol N-acetylglucosamine transferase from Prochlorococcus marinus (strain MIT 9303).